A 422-amino-acid polypeptide reads, in one-letter code: Adenosylhomocysteinase (422 aa).

The substrate site is built by Asp129 and Glu154. NAD(+) is bound at residue 155 to 157; it reads TTT. Residues Lys184 and Asp188 each coordinate substrate. Residues Asn189, 218–223, Glu241, Asn276, 297–299, and Asn344 contribute to the NAD(+) site; these read GYGWCG and AGH.

This sequence belongs to the adenosylhomocysteinase family. It depends on NAD(+) as a cofactor.

The protein resides in the cytoplasm. It carries out the reaction S-adenosyl-L-homocysteine + H2O = L-homocysteine + adenosine. Its pathway is amino-acid biosynthesis; L-homocysteine biosynthesis; L-homocysteine from S-adenosyl-L-homocysteine: step 1/1. May play a key role in the regulation of the intracellular concentration of adenosylhomocysteine. In Pyrococcus abyssi (strain GE5 / Orsay), this protein is Adenosylhomocysteinase.